We begin with the raw amino-acid sequence, 156 residues long: Glycine cleavage system H protein 2, mitochondrial (156 aa).

The N-terminal 23 residues, 1–23 (MACRLFWASRVASHLRISVAQRG), are a transit peptide targeting the mitochondrion. The 83-residue stretch at 47–129 (KATFGITDHA…YEQGWIIKVE (83 aa)) folds into the Lipoyl-binding domain. Position 88 is an N6-lipoyllysine (Lys-88). Residue Ser-131 is modified to Phosphoserine.

The protein belongs to the GcvH family. In terms of assembly, the glycine cleavage system is composed of four proteins: P, T, L and H. The cofactor is (R)-lipoate.

It is found in the mitochondrion. Its function is as follows. The glycine decarboxylase (GDC) or glycine cleavage system catalyzes the degradation of glycine. The H protein shuttles the methylamine group of glycine from the P protein to the T protein. The chain is Glycine cleavage system H protein 2, mitochondrial (GDH2) from Arabidopsis thaliana (Mouse-ear cress).